Here is a 298-residue protein sequence, read N- to C-terminus: Probable endonuclease 4 (298 aa).

Zn(2+)-binding residues include histidine 69, histidine 111, glutamate 146, aspartate 180, histidine 183, histidine 215, aspartate 228, histidine 230, and glutamate 260.

The protein belongs to the AP endonuclease 2 family. Zn(2+) is required as a cofactor.

The catalysed reaction is Endonucleolytic cleavage to 5'-phosphooligonucleotide end-products.. In terms of biological role, endonuclease IV plays a role in DNA repair. It cleaves phosphodiester bonds at apurinic or apyrimidinic (AP) sites, generating a 3'-hydroxyl group and a 5'-terminal sugar phosphate. The sequence is that of Probable endonuclease 4 from Bacillus cereus (strain B4264).